Here is an 84-residue protein sequence, read N- to C-terminus: Acid stress protein IbaG (84 aa).

It belongs to the BolA/IbaG family.

Functionally, involved in cell resistance against acid stress. The polypeptide is Acid stress protein IbaG (Escherichia coli O6:H1 (strain CFT073 / ATCC 700928 / UPEC)).